A 147-amino-acid chain; its full sequence is Large ribosomal subunit protein uL15 (147 aa).

Belongs to the universal ribosomal protein uL15 family. Part of the 50S ribosomal subunit.

In terms of biological role, binds to the 23S rRNA. This chain is Large ribosomal subunit protein uL15, found in Blochmanniella floridana.